Reading from the N-terminus, the 357-residue chain is Uroporphyrinogen decarboxylase (357 aa).

Substrate is bound by residues 27-31 (RQAGR), aspartate 77, tyrosine 154, serine 209, and histidine 330.

This sequence belongs to the uroporphyrinogen decarboxylase family. Homodimer.

It is found in the cytoplasm. It catalyses the reaction uroporphyrinogen III + 4 H(+) = coproporphyrinogen III + 4 CO2. Its pathway is porphyrin-containing compound metabolism; protoporphyrin-IX biosynthesis; coproporphyrinogen-III from 5-aminolevulinate: step 4/4. In terms of biological role, catalyzes the decarboxylation of four acetate groups of uroporphyrinogen-III to yield coproporphyrinogen-III. The sequence is that of Uroporphyrinogen decarboxylase from Acinetobacter baumannii (strain ACICU).